The following is a 327-amino-acid chain: ATP-dependent 6-phosphofructokinase (327 aa).

G12 is an ATP binding site. Residues 22 to 26 (RGVVR) and 55 to 60 (RYSVSD) contribute to the ADP site. Residues 73–74 (RF) and 103–106 (GDGS) contribute to the ATP site. Position 104 (D104) interacts with Mg(2+). Residue 127–129 (TID) participates in substrate binding. The active-site Proton acceptor is D129. R156 lines the ADP pocket. Residues R164 and 171–173 (MGR) each bind substrate. ADP is bound by residues 187-189 (GCE), K213, and 215-217 (KKH). Substrate contacts are provided by residues E224, R245, and 251–254 (HIQR).

Belongs to the phosphofructokinase type A (PFKA) family. ATP-dependent PFK group I subfamily. Prokaryotic clade 'B1' sub-subfamily. In terms of assembly, homotetramer. Mg(2+) is required as a cofactor.

The protein resides in the cytoplasm. It catalyses the reaction beta-D-fructose 6-phosphate + ATP = beta-D-fructose 1,6-bisphosphate + ADP + H(+). Its pathway is carbohydrate degradation; glycolysis; D-glyceraldehyde 3-phosphate and glycerone phosphate from D-glucose: step 3/4. With respect to regulation, allosterically activated by ADP and other diphosphonucleosides, and allosterically inhibited by phosphoenolpyruvate. Catalyzes the phosphorylation of D-fructose 6-phosphate to fructose 1,6-bisphosphate by ATP, the first committing step of glycolysis. The polypeptide is ATP-dependent 6-phosphofructokinase (Yersinia pseudotuberculosis serotype O:1b (strain IP 31758)).